The following is a 95-amino-acid chain: MTKSELIEKLATRQSQLSAKEVEGAIKEMLEQMATTLESGDRIEIRGFGSFSLHYRAPRTGRNPKTGSSVDLEGKYVPHFKPGKELRERVDAVNV.

Positions 56–76 (RAPRTGRNPKTGSSVDLEGKY) are disordered.

It belongs to the bacterial histone-like protein family. In terms of assembly, heterodimer of an alpha and a beta chain.

Its function is as follows. This protein is one of the two subunits of integration host factor, a specific DNA-binding protein that functions in genetic recombination as well as in transcriptional and translational control. This chain is Integration host factor subunit beta, found in Shewanella baltica (strain OS223).